The following is a 209-amino-acid chain: Transmembrane 4 L6 family member 19 (209 aa).

The Cytoplasmic portion of the chain corresponds to M1 to R16. A helical membrane pass occupies residues I17–L37. Over L38–T59 the chain is Extracellular. The chain crosses the membrane as a helical span at residues G60–W80. At R81–S93 the chain is on the cytoplasmic side. The helical transmembrane segment at V94 to T114 threads the bilayer. The Extracellular portion of the chain corresponds to S115–S175. A glycan (N-linked (GlcNAc...) asparagine) is linked at N133. A helical membrane pass occupies residues L176–I196. The tract at residues L186–I196 is important for homodimerization. Over N197–K209 the chain is Cytoplasmic.

This sequence belongs to the L6 tetraspanin family. May form homodimers and homooligomers. Interacts with integrins ITGAV and ITGB3. Interacts with components of members of the V0 complex of vacuolar(H+)-ATPase (V-ATPase), including ATP6V0B and ATP6V0D2; this interaction inhibits V1-V0 complex assembly. As to expression, in adipose tissue, expressed by macrophages.

It localises to the lysosome membrane. It is found in the cytoplasm. The protein resides in the cytoskeleton. The protein localises to the cell projection. Its subcellular location is the filopodium. In terms of biological role, negatively regulates vacuolar (H+)-ATPase (V-ATPase) activity by interacting with members of V-ATPase V0 complex and hence inhibiting V1-V0 complex assembly. Required for multinucleation during osteoclast differentiation. In Homo sapiens (Human), this protein is Transmembrane 4 L6 family member 19 (TM4SF19).